Here is a 322-residue protein sequence, read N- to C-terminus: Protein SEC13 homolog (322 aa).

At Val-2 the chain carries N-acetylvaline. 6 WD repeats span residues 11–50 (SHED…QILI), 55–96 (GHEG…WEKS), 101–144 (GHDS…EVKK), 148–204 (AHTI…QWKE), 210–253 (AHSD…SNTW), and 260–299 (KFND…QWVC). The residue at position 184 (Ser-184) is a Phosphoserine. Ser-309 bears the Phosphoserine mark.

This sequence belongs to the WD repeat SEC13 family. In terms of assembly, at the nuclear pore: component of the Y-shaped Nup107-160 subcomplex of the nuclear pore complex (NPC). The Nup107-160 subcomplex includes NUP160, NUP133, NUP107, NUP98, NUP85, NUP43, NUP37, SEH1 and SEC13. At the COPII coat complex: interacts with SEC31A and SEC31B. Interacts with SEC16A. Interacts with SEC16B. Component of the GATOR2 subcomplex, composed of MIOS, SEC13, SEH1L, WDR24 and WDR59. The GATOR2 complex interacts with CASTOR1 and CASTOR2; the interaction is negatively regulated by arginine. The GATOR2 complex interacts with SESN1, SESN2 and SESN3; the interaction is negatively regulated by amino acids.

The protein localises to the cytoplasmic vesicle. It is found in the COPII-coated vesicle membrane. The protein resides in the endoplasmic reticulum membrane. It localises to the nucleus. Its subcellular location is the nuclear pore complex. The protein localises to the lysosome membrane. With respect to regulation, the GATOR2 complex is negatively regulated by the upstream amino acid sensors CASTOR1 and SESN2, which sequester the GATOR2 complex in absence of amino acids. In the presence of abundant amino acids, GATOR2 is released from CASTOR1 and SESN2 and activated. In terms of biological role, functions as a component of the nuclear pore complex (NPC) and the COPII coat. At the endoplasmic reticulum, SEC13 is involved in the biogenesis of COPII-coated vesicles. Required for the exit of adipsin (CFD/ADN), an adipocyte-secreted protein from the endoplasmic reticulum. Functionally, as a component of the GATOR2 complex, functions as an activator of the amino acid-sensing branch of the mTORC1 signaling pathway. The GATOR2 complex indirectly activates mTORC1 through the inhibition of the GATOR1 subcomplex. GATOR2 probably acts as an E3 ubiquitin-protein ligase toward GATOR1. In the presence of abundant amino acids, the GATOR2 complex mediates ubiquitination of the NPRL2 core component of the GATOR1 complex, leading to GATOR1 inactivation. In the absence of amino acids, GATOR2 is inhibited, activating the GATOR1 complex. Within the GATOR2 complex, SEC13 and SEH1L are required to stabilize the complex. This is Protein SEC13 homolog from Homo sapiens (Human).